A 148-amino-acid polypeptide reads, in one-letter code: Protein SOB FIVE-LIKE 1 (148 aa).

Residues 1–10 (MESPRNHGGS) are compositionally biased toward basic and acidic residues. Disordered stretches follow at residues 1–20 (MESP…SCES) and 33–148 (NDQS…SKTK). The short motif at 20–25 (SGWTMY) is the SOFL-A element. Over residues 54-76 (DGYENDDGDTSDDGGDEESDDSM) the composition is skewed to acidic residues. Positions 75-84 (SMASDASSGP) match the SOFL-B motif. A compositionally biased stretch (basic residues) spans 91–101 (HINKHAARKNG). The segment covering 111-128 (QHTEKTISNEGEKSDLKA) has biased composition (basic and acidic residues).

Belongs to the SOFL plant protein family. As to expression, predominantly expressed in the vascular tissues of seedlings, developing leaves, flowers and siliques, but barely detectable in roots and stems.

It localises to the cytoplasm. The protein resides in the nucleus. Involved in cytokinin-mediated development. Together with SOFL2, triggers the endogenous content of specific bioactive cytokinins derived from the biosynthetic intermediates trans-zeatin riboside monophosphate (tZRMP) and N(6)-(Delta(2)-isopentenyl)adenosine monophosphate (iPRMP) such as N-glucosides trans-zeatin 7-glucoside (tZ7G), cis-zeatin 7-glucoside (cZ7G) and N(6)-(Delta(2)-isopentenyl)adenine 7-glucoside (iP7G). This is Protein SOB FIVE-LIKE 1 from Arabidopsis thaliana (Mouse-ear cress).